Here is a 136-residue protein sequence, read N- to C-terminus: Ig kappa chain V-V region MOPC 21 (136 aa).

A signal peptide spans 1–29 (MHQTSMGIKMESHTLVFISILLCLYGADG). The interval 30–52 (NIVMTQSPKSMSMSVGERVTLTC) is framework-1. The tract at residues 53-63 (KASENVVTYVS) is complementarity-determining-1. Positions 64 to 78 (WYQQKPEQSPKLLIY) are framework-2. The interval 79 to 85 (GASNRYT) is complementarity-determining-2. The tract at residues 86–117 (GVPDRFTGSGSATDFTLTISSVQAEDLADYHC) is framework-3. A complementarity-determining-3 region spans residues 118-126 (GQGYSYPYT). Positions 127–136 (FGGGTKLEIK) are framework-4.

In Mus musculus (Mouse), this protein is Ig kappa chain V-V region MOPC 21.